The sequence spans 249 residues: Adapter protein MecA (249 aa).

This sequence belongs to the MecA family. As to quaternary structure, homodimer.

Its function is as follows. Enables the recognition and targeting of unfolded and aggregated proteins to the ClpC protease or to other proteins involved in proteolysis. In Streptococcus thermophilus (strain CNRZ 1066), this protein is Adapter protein MecA.